We begin with the raw amino-acid sequence, 574 residues long: Proline--tRNA ligase (574 aa).

The protein belongs to the class-II aminoacyl-tRNA synthetase family. ProS type 1 subfamily. Homodimer.

It is found in the cytoplasm. It carries out the reaction tRNA(Pro) + L-proline + ATP = L-prolyl-tRNA(Pro) + AMP + diphosphate. Functionally, catalyzes the attachment of proline to tRNA(Pro) in a two-step reaction: proline is first activated by ATP to form Pro-AMP and then transferred to the acceptor end of tRNA(Pro). As ProRS can inadvertently accommodate and process non-cognate amino acids such as alanine and cysteine, to avoid such errors it has two additional distinct editing activities against alanine. One activity is designated as 'pretransfer' editing and involves the tRNA(Pro)-independent hydrolysis of activated Ala-AMP. The other activity is designated 'posttransfer' editing and involves deacylation of mischarged Ala-tRNA(Pro). The misacylated Cys-tRNA(Pro) is not edited by ProRS. The polypeptide is Proline--tRNA ligase (Sodalis glossinidius (strain morsitans)).